The following is a 303-amino-acid chain: 1-phosphofructokinase (303 aa).

248 to 249 (GD) is a binding site for ATP. Aspartate 249 (proton acceptor) is an active-site residue.

The protein belongs to the carbohydrate kinase PfkB family.

It carries out the reaction beta-D-fructose 1-phosphate + ATP = beta-D-fructose 1,6-bisphosphate + ADP + H(+). Catalyzes the ATP-dependent phosphorylation of fructose-l-phosphate to fructose-l,6-bisphosphate. The chain is 1-phosphofructokinase (fruK) from Bacillus subtilis (strain 168).